We begin with the raw amino-acid sequence, 503 residues long: Probable cytosol aminopeptidase (503 aa).

Residues Lys-270 and Asp-275 each contribute to the Mn(2+) site. Lys-282 is a catalytic residue. Mn(2+) contacts are provided by Asp-293, Asp-352, and Glu-354. Residue Arg-356 is part of the active site.

Belongs to the peptidase M17 family. Requires Mn(2+) as cofactor.

The protein resides in the cytoplasm. The enzyme catalyses Release of an N-terminal amino acid, Xaa-|-Yaa-, in which Xaa is preferably Leu, but may be other amino acids including Pro although not Arg or Lys, and Yaa may be Pro. Amino acid amides and methyl esters are also readily hydrolyzed, but rates on arylamides are exceedingly low.. It carries out the reaction Release of an N-terminal amino acid, preferentially leucine, but not glutamic or aspartic acids.. Presumably involved in the processing and regular turnover of intracellular proteins. Catalyzes the removal of unsubstituted N-terminal amino acids from various peptides. This chain is Probable cytosol aminopeptidase, found in Salmonella agona (strain SL483).